Consider the following 522-residue polypeptide: Penicillin-sensitive carboxypeptidase A (522 aa).

Ser94 (acyl-ester intermediate) is an active-site residue. Lys97 (proton acceptor) is an active-site residue. Ser351 is a catalytic residue. Lys461 lines the substrate pocket.

Belongs to the peptidase S13 family.

It carries out the reaction Preferential cleavage: (Ac)2-L-Lys-D-Ala-|-D-Ala. Also transpeptidation of peptidyl-alanyl moieties that are N-acyl substituents of D-alanine.. Its activity is regulated as follows. Inhibited by penicillin G. Functionally, carboxypeptidase. This Dictyostelium discoideum (Social amoeba) protein is Penicillin-sensitive carboxypeptidase A (pscA).